The primary structure comprises 375 residues: 1-deoxy-D-xylulose 5-phosphate reductoisomerase (375 aa).

The NADPH site is built by threonine 12, glycine 13, serine 14, isoleucine 15, asparagine 39, and asparagine 115. Lysine 116 serves as a coordination point for 1-deoxy-D-xylulose 5-phosphate. An NADPH-binding site is contributed by glutamate 117. Residue aspartate 141 coordinates Mn(2+). 4 residues coordinate 1-deoxy-D-xylulose 5-phosphate: serine 142, glutamate 143, serine 163, and histidine 186. Residue glutamate 143 participates in Mn(2+) binding. Residue glycine 192 participates in NADPH binding. Residues serine 199, asparagine 204, lysine 205, and glutamate 208 each contribute to the 1-deoxy-D-xylulose 5-phosphate site. Glutamate 208 contacts Mn(2+).

This sequence belongs to the DXR family. Mg(2+) is required as a cofactor. It depends on Mn(2+) as a cofactor.

It carries out the reaction 2-C-methyl-D-erythritol 4-phosphate + NADP(+) = 1-deoxy-D-xylulose 5-phosphate + NADPH + H(+). The protein operates within isoprenoid biosynthesis; isopentenyl diphosphate biosynthesis via DXP pathway; isopentenyl diphosphate from 1-deoxy-D-xylulose 5-phosphate: step 1/6. Its function is as follows. Catalyzes the NADPH-dependent rearrangement and reduction of 1-deoxy-D-xylulose-5-phosphate (DXP) to 2-C-methyl-D-erythritol 4-phosphate (MEP). The sequence is that of 1-deoxy-D-xylulose 5-phosphate reductoisomerase from Thermotoga neapolitana (strain ATCC 49049 / DSM 4359 / NBRC 107923 / NS-E).